Reading from the N-terminus, the 1938-residue chain is Myosin-4 (1938 aa).

Residues 33-82 (DAKSSVFVADPKESFVKATVQSREGGKVTAKTEAGATVTVKEDQVFPMNP) form the Myosin N-terminal SH3-like domain. Ser-36 carries the post-translational modification Phosphoserine. Phosphothreonine occurs at positions 64 and 69. The Myosin motor domain maps to 86-781 (DKIEDMAMMT…LLGLLEEMRD (696 aa)). 179 to 186 (GESGAGKT) serves as a coordination point for ATP. Position 389 is a phosphotyrosine (Tyr-389). Residue Ser-392 is modified to Phosphoserine. Position 419 is a phosphothreonine (Thr-419). Tyr-424 carries the phosphotyrosine modification. The actin-binding stretch occupies residues 658-680 (LNKLMTNLRSTHPHFVRCIIPNE). His-756 is modified (pros-methylhistidine). The segment at 760 to 774 (KFGHTKVFFKAGLLG) is actin-binding. Positions 784–813 (LAQLITRTQAMCRGFLARVEYKKMVERRES) constitute an IQ domain. Residues 845–1926 (SAETEKEMAN…ESQVNKLRVK (1082 aa)) adopt a coiled-coil conformation. Ser-1091, Ser-1095, Ser-1161, and Ser-1236 each carry phosphoserine. Thr-1240 bears the Phosphothreonine mark. Ser-1242 carries the post-translational modification Phosphoserine. Position 1254 is a phosphothreonine (Thr-1254). Phosphoserine is present on Ser-1260. Thr-1264 carries the post-translational modification Phosphothreonine. Residue Ser-1277 is modified to Phosphoserine. Position 1285 is a phosphothreonine (Thr-1285). Phosphoserine occurs at positions 1287, 1291, 1302, and 1305. Tyr-1463 bears the Phosphotyrosine mark. Thr-1466 is subject to Phosphothreonine. Position 1473 is a phosphoserine (Ser-1473). Tyr-1491 carries the post-translational modification Phosphotyrosine. Ser-1494 is subject to Phosphoserine. A Phosphothreonine modification is found at Thr-1500. At Ser-1513 the chain carries Phosphoserine. Thr-1516 carries the phosphothreonine modification. Residues Ser-1541, Ser-1553, Ser-1573, Ser-1599, Ser-1602, Ser-1713, and Ser-1725 each carry the phosphoserine modification. Phosphothreonine is present on residues Thr-1729 and Thr-1735. The residue at position 1738 (Ser-1738) is a Phosphoserine.

It belongs to the TRAFAC class myosin-kinesin ATPase superfamily. Myosin family. Muscle myosin is a hexameric protein that consists of 2 heavy chain subunits (MHC), 2 alkali light chain subunits (MLC) and 2 regulatory light chain subunits (MLC-2).

Its subcellular location is the cytoplasm. The protein localises to the myofibril. Muscle contraction. This chain is Myosin-4 (MYH4), found in Oryctolagus cuniculus (Rabbit).